The following is a 637-amino-acid chain: Nucleoside triphosphatase I (637 aa).

One can recognise a Helicase ATP-binding domain in the interval 43–205 (FLGLNSMNSI…QMLVNLLRPG (163 aa)). Position 56 to 63 (56 to 63 (QETGVGKT)) interacts with ATP. A DEXH box motif is present at residues 142 to 145 (DECH). The 180-residue stretch at 358–537 (ELYNYLYEHS…QLYKVFKHSS (180 aa)) folds into the Helicase C-terminal domain. Residues 459-526 (DIFILDMTWN…DIIQSKSKEF (68 aa)) are binding to the cap-specific mRNA (nucleoside-2'-O-)-methyltransferase.

The protein belongs to the helicase family. NPH I subfamily. As to quaternary structure, monomer. Interacts (via C-terminus) with RAP94 (via N-terminus). Interacts with the cap-specific mRNA (nucleoside-2'-O-)-methyltransferase.

The protein localises to the virion. It catalyses the reaction a ribonucleoside 5'-triphosphate + H2O = a ribonucleoside 5'-diphosphate + phosphate + H(+). Functionally, DNA-dependent ATPase required for providing the needed energy to achieve the termination of early transcripts. Acts in concert with the RAP94 subunit of the virion RNA polymerase and the capping enzyme/VTF to catalyze release of UUUUUNU-containing nascent RNA from the elongation complex. NPH-I must bind ssDNA in order to exhibit ATPase activity. In Vertebrata (FPV), this protein is Nucleoside triphosphatase I (NPH1).